Here is a 602-residue protein sequence, read N- to C-terminus: Basic-leucine zipper transcription factor B (602 aa).

Residues 1–10 (MNQFYQSTTG) show a composition bias toward polar residues. The disordered stretch occupies residues 1–128 (MNQFYQSTTG…NRVNQNLASR (128 aa)). Low complexity-rich tracts occupy residues 11–54 (GQQN…TSTS) and 66–102 (QQQIQQQQIQQQQQQQQQQQQQIQQQSVDTPSSYNGD). Residues 58–94 (KNKDNQSKQQQIQQQQIQQQQQQQQQQQQQIQQQSVD) adopt a coiled-coil conformation. Residues 113–176 (ENKKNRNRVN…GVEIMKPDPA (64 aa)) enclose the bZIP domain. The tract at residues 115–135 (KKNRNRVNQNLASRNYRQRKK) is basic motif. A leucine-zipper region spans residues 138–145 (IKEIEEKL). Disordered regions lie at residues 328-401 (TNLS…QNNN) and 525-602 (QNQT…PSRQ). Low complexity-rich tracts occupy residues 336-350 (PNPTSPNSSSVTQST), 358-401 (LTLL…QNNN), and 525-592 (QNQT…SSPY). The stretch at 509–552 (TFSQQTQQLQQAQLQLQNQTKQQQQQLQNNNNNNNNNNNNNNSF) forms a coiled coil. Over residues 593-602 (NHHQQQPSRQ) the composition is skewed to polar residues.

It belongs to the bZIP family. Binds DNA as a dimer. Heterodimerizes with dimA; in vitro. Also able to form homodimer; in vitro.

It is found in the nucleus. Transcriptional regulator involved in DIF-1 signaling. DIF-1 (Differentiation Inducing Factor-1) is a signal molecule involved in the differentiation of pstO (prestalk-O) cells. May be a direct activator of ecmA. The chain is Basic-leucine zipper transcription factor B (dimB) from Dictyostelium discoideum (Social amoeba).